Reading from the N-terminus, the 241-residue chain is uncharacterized protein (241 aa).

5 consecutive transmembrane segments (helical) span residues 7–27 (LIFLLFVIVVSYIFNGLWSVF), 37–57 (LFLLIAFHPQHLDGLIILLLI), 72–92 (IIALVGILLTIIKGVIKSGFG), 110–130 (INLVVFSILLTSVYVLGYVAF), and 138–158 (FGTLYTAFGGLALLGAGIKII).

The protein localises to the cell membrane. This is an uncharacterized protein from Methanocaldococcus jannaschii (strain ATCC 43067 / DSM 2661 / JAL-1 / JCM 10045 / NBRC 100440) (Methanococcus jannaschii).